The primary structure comprises 686 residues: tRNA wybutosine-synthesizing protein 4 (686 aa).

The disordered stretch occupies residues 1–22; it reads MGPRSRQRRTGTVQSTNDSSSL. Polar residues predominate over residues 10–22; that stretch reads TGTVQSTNDSSSL. Residues R59, G89, D114, 161–162, and E188 each bind S-adenosyl-L-methionine; that span reads DL.

This sequence belongs to the methyltransferase superfamily. LCMT family. As to quaternary structure, interacts with RNF144B/IBRDC2.

The enzyme catalyses 7-[(3S)-3-amino-3-carboxypropyl]wyosine(37) in tRNA(Phe) + S-adenosyl-L-methionine = 7-[(3S)-(3-amino-3-methoxycarbonyl)propyl]wyosine(37) in tRNA(Phe) + S-adenosyl-L-homocysteine. The catalysed reaction is 7-[(3S)-(3-amino-3-methoxycarbonyl)propyl]wyosine(37) in tRNA(Phe) + S-adenosyl-L-methionine + CO2 = wybutosine(37) in tRNA(Phe) + S-adenosyl-L-homocysteine + 2 H(+). The protein operates within tRNA modification; wybutosine-tRNA(Phe) biosynthesis. In terms of biological role, probable S-adenosyl-L-methionine-dependent methyltransferase that acts as a component of the wybutosine biosynthesis pathway. Wybutosine is a hyper modified guanosine with a tricyclic base found at the 3'-position adjacent to the anticodon of eukaryotic phenylalanine tRNA. May methylate the carboxyl group of leucine residues to form alpha-leucine ester residues. This is tRNA wybutosine-synthesizing protein 4 (Lcmt2) from Rattus norvegicus (Rat).